The primary structure comprises 628 residues: MBT domain-containing protein 1 (628 aa).

Residues 1–31 (MFDGYDSCSEDTSSSSSSEESEEEVAPLPSN) form a disordered region. An FCS-type zinc finger spans residues 45 to 80 (PDGKSGMATCEMCGMVGVRDAFYSKTKRFCSVSCSR). Zn(2+) contacts are provided by Cys54, Cys57, Cys74, and Cys78. At Lys115 the chain carries N6-acetyllysine. MBT repeat units lie at residues 141–245 (FSWG…LVPP), 253–350 (TNWK…IGHR), 351–456 (FKRS…LTPP), and 464–560 (FKWF…LQPP). Disordered regions lie at residues 560–590 (PASQ…HKKM) and 606–628 (NFLQ…KQEP). Residues 562–573 (SQSSRENQSASS) show a composition bias toward low complexity. A compositionally biased stretch (basic residues) spans 574 to 590 (KQKKKAKSQQYKGHKKM). Positions 609-620 (QGASDQESNGSA) are enriched in polar residues.

In terms of assembly, monomer. Component of the NuA4 histone acetyltransferase complex. Interacts with EPC1; interaction is direct and promotes recruitment of MBTD1 into the NuA4 histone acetyltransferase complex.

It is found in the nucleus. The protein resides in the chromosome. In terms of biological role, chromatin reader component of the NuA4 histone acetyltransferase complex, a multiprotein complex involved in transcriptional activation of select genes principally by acetylation of nucleosomal histones H4 and H2A. The NuA4 complex plays a direct role in repair of DNA double-strand breaks (DSBs) by promoting homologous recombination (HR). MBTD1 specifically recognizes and binds monomethylated and dimethylated 'Lys-20' on histone H4 (H4K20me1 and H4K20me2, respectively). In the NuA4 complex, MBTD1 promotes recruitment of the complex to H4K20me marks by competing with TP53BP1 for binding to H4K20me. Following recruitment to H4K20me at DNA breaks, the NuA4 complex catalyzes acetylation of 'Lys-15' on histone H2A (H2AK15), blocking the ubiquitination mark required for TP53BP1 localization at DNA breaks, thereby promoting homologous recombination (HR). This chain is MBT domain-containing protein 1, found in Homo sapiens (Human).